A 382-amino-acid chain; its full sequence is 4-hydroxybutyrate dehydrogenase (382 aa).

Residues Asp37, Asn67, 94–98 (GSSID), 138–142 (TTSGT), and Lys159 contribute to the NAD(+) site. Fe cation-binding residues include Asp193, His197, His261, and His280. His280 lines the NAD(+) pocket.

It belongs to the iron-containing alcohol dehydrogenase family. Requires Fe cation as cofactor.

It carries out the reaction 4-hydroxybutanoate + NAD(+) = succinate semialdehyde + NADH + H(+). Its activity is regulated as follows. Shows competitive inhibition of GHBDH activity by the product succinic semialdehyde, and non-competitive inhibitions by the three other substrate-product combinations. The conversion of GHB to SSA is activated by two different saturating purified nudix hydrolases, B.methanolicus activator ACT and E.coli NudF. The nudix hydrolases do not activate the reverse reaction. Involved in the degradation of 4-hydroxybutyrate. Catalyzes the interconversion of gamma-hydroxybutyrate (GHB) and succinic semialdehyde (SSA). In Cupriavidus necator (Alcaligenes eutrophus), this protein is 4-hydroxybutyrate dehydrogenase.